A 538-amino-acid polypeptide reads, in one-letter code: Putative cysteine ligase BshC (538 aa).

Residues 460–484 (KINEQIELLERMLKRNVEKKHEVEL) adopt a coiled-coil conformation.

This sequence belongs to the BshC family.

Functionally, involved in bacillithiol (BSH) biosynthesis. May catalyze the last step of the pathway, the addition of cysteine to glucosamine malate (GlcN-Mal) to generate BSH. This Bacillus thuringiensis (strain Al Hakam) protein is Putative cysteine ligase BshC.